A 311-amino-acid chain; its full sequence is Malate dehydrogenase (311 aa).

Residues 7 to 12 and aspartate 32 contribute to the NAD(+) site; that span reads GAGNVG. Positions 82 and 88 each coordinate substrate. NAD(+) contacts are provided by residues asparagine 95 and 118 to 120; that span reads VSN. Substrate is bound by residues asparagine 120 and arginine 151. Histidine 175 functions as the Proton acceptor in the catalytic mechanism.

This sequence belongs to the LDH/MDH superfamily. MDH type 3 family.

It catalyses the reaction (S)-malate + NAD(+) = oxaloacetate + NADH + H(+). Functionally, catalyzes the reversible oxidation of malate to oxaloacetate. This Flavobacterium johnsoniae (strain ATCC 17061 / DSM 2064 / JCM 8514 / BCRC 14874 / CCUG 350202 / NBRC 14942 / NCIMB 11054 / UW101) (Cytophaga johnsonae) protein is Malate dehydrogenase.